Consider the following 401-residue polypeptide: Transcriptional regulator Myc-2 (401 aa).

O-linked (GlcNAc) threonine glycosylation occurs at Thr58. Residues 76–84 (EMVSEFLGD) carry the 9aaTAD motif. Disordered stretches follow at residues 177–251 (SSKS…SRYP) and 286–325 (LESS…HNVL). Acidic residues predominate over residues 205-230 (DSEDEEEEEEEEEEEEEEEEEEEEID). Residues 233-247 (TVEKRQKRNEAEVSD) are compositionally biased toward basic and acidic residues. Residues 288–297 (SSSSNNSSSN) show a composition bias toward low complexity. The bHLH domain occupies 317–369 (DKRRTHNVLERQRRNELKLSFFALRDEIPEVANNEKAAKVVILKKATECIHSM). The leucine-zipper stretch occupies residues 376-397 (LLSIKEQLRRKSEQLKHRLQQL).

Efficient DNA binding requires dimerization with another bHLH protein. Binds DNA as a heterodimer with MAX.

Its subcellular location is the nucleus. Functionally, transcription factor that binds DNA in a non-specific manner, yet also specifically recognizes the core sequence 5'-CAC[GA]TG-3'. Activates the transcription of growth-related genes. This is Transcriptional regulator Myc-2 (mycb) from Cyprinus carpio (Common carp).